A 276-amino-acid chain; its full sequence is Formamidopyrimidine-DNA glycosylase (276 aa).

Pro2 functions as the Schiff-base intermediate with DNA in the catalytic mechanism. The active-site Proton donor is Glu3. Lys60 acts as the Proton donor; for beta-elimination activity in catalysis. Residues His93 and Arg112 each contribute to the DNA site. Residues 240-274 (FVYGKKDEPCKNCGTMISKIVVGGRGTHFCAKCQT) form an FPG-type zinc finger. Catalysis depends on Arg264, which acts as the Proton donor; for delta-elimination activity.

The protein belongs to the FPG family. As to quaternary structure, monomer. It depends on Zn(2+) as a cofactor.

The enzyme catalyses Hydrolysis of DNA containing ring-opened 7-methylguanine residues, releasing 2,6-diamino-4-hydroxy-5-(N-methyl)formamidopyrimidine.. It catalyses the reaction 2'-deoxyribonucleotide-(2'-deoxyribose 5'-phosphate)-2'-deoxyribonucleotide-DNA = a 3'-end 2'-deoxyribonucleotide-(2,3-dehydro-2,3-deoxyribose 5'-phosphate)-DNA + a 5'-end 5'-phospho-2'-deoxyribonucleoside-DNA + H(+). In terms of biological role, involved in the GO system responsible for removing an oxidatively damaged form of guanine (7,8-dihydro-8-oxoguanine, 8-oxo-dGTP) from DNA and the nucleotide pool. 8-oxo-dGTP is inserted opposite dA and dC residues of template DNA with almost equal efficiency thus leading to A.T to G.C transversions. Involved in base excision repair of DNA damaged by oxidation or by mutagenic agents. Acts as a DNA glycosylase that recognizes and removes damaged bases. Has a preference for oxidized purines, such as 8-oxo-dGTP. Has AP (apurinic/apyrimidinic) lyase activity and introduces nicks in the DNA strand. Cleaves the DNA backbone by beta-delta elimination to generate a single-strand break at the site of the removed base. This is Formamidopyrimidine-DNA glycosylase (mutM) from Bacillus subtilis (strain 168).